A 346-amino-acid polypeptide reads, in one-letter code: fMet-Leu-Phe receptor (346 aa).

Asn1 and Asn7 each carry an N-linked (GlcNAc...) asparagine glycan. The Extracellular portion of the chain corresponds to 1 to 24 (NSSLPTNISGGTPAVSAGYLFLDI). The helical transmembrane segment at 25 to 47 (ITYLVFAVTFVLGVLGNGLVIWV) threads the bilayer. Residues 48-58 (AGFRMRHTVTT) lie on the Cytoplasmic side of the membrane. The helical transmembrane segment at 59-80 (ISYLNLAVADFCFTSTLPFLMV) threads the bilayer. Topologically, residues 81–97 (VKVMRGHWPFGWFLCKF) are extracellular. Residues Cys95 and Cys173 are joined by a disulfide bond. A helical transmembrane segment spans residues 98–118 (IFTIVDINLFGSVFLIALIAL). Residues 119-137 (DRCVCVLHPVWTQNHRTVS) are Cytoplasmic-facing. Residues 138–159 (LAKKVIIGPWVMALLLTLPVII) traverse the membrane as a helical segment. Residues 160-202 (RVTTVPGKTGTVACTFDFSPWTNDPVEKLKVTIAMLTVRGIIR) lie on the Extracellular side of the membrane. The helical transmembrane segment at 203-223 (FIIGFSVPMSIVAVSYGLIAT) threads the bilayer. Over 224–239 (KIHKQGLIKSSRPLRV) the chain is Cytoplasmic. A helical transmembrane segment spans residues 240-263 (LSFVVAAFFLCWSPYQVVAFIATV). At 264–282 (RLRNILQGLSKELRIAVDA) the chain is on the extracellular side. A helical membrane pass occupies residues 283–302 (TSALAFFNSCLNPMLYVFMG). The Cytoplasmic segment spans residues 303–346 (QDFRERLIHSLPTSLERALTEDSAQTSDTATNSTLPSAEVPLQA). The disordered stretch occupies residues 321-346 (LTEDSAQTSDTATNSTLPSAEVPLQA). A compositionally biased stretch (polar residues) spans 324–338 (DSAQTSDTATNSTLP).

This sequence belongs to the G-protein coupled receptor 1 family. In terms of processing, phosphorylated; which is necessary for desensitization.

It is found in the cell membrane. Its function is as follows. High affinity receptor for N-formyl-methionyl peptides (fMLP), which are powerful neutrophil chemotactic factors. Binding of fMLP to the receptor stimulates intracellular calcium mobilization and superoxide anion release. This response is mediated via a G-protein that activates a phosphatidylinositol-calcium second messenger system. Receptor for TAFA4, mediates its effects on chemoattracting macrophages, promoting phagocytosis and increasing ROS release. Receptor for cathepsin CTSG, leading to increased phagocyte chemotaxis. This Macaca mulatta (Rhesus macaque) protein is fMet-Leu-Phe receptor (FPR1).